A 437-amino-acid chain; its full sequence is GTPase Der (437 aa).

EngA-type G domains lie at 3–168 (PLIA…PETE) and 178–353 (IQLA…QNRS). Residues 9-16 (GRPNVGKS), 56-60 (DTGGY), 120-123 (NKVE), 184-191 (GRPNVGKS), 231-235 (DTAGL), and 296-299 (NKWD) each bind GTP. The 84-residue stretch at 354–437 (RKISTSVLNK…VPISMRFMQK (84 aa)) folds into the KH-like domain.

It belongs to the TRAFAC class TrmE-Era-EngA-EngB-Septin-like GTPase superfamily. EngA (Der) GTPase family. As to quaternary structure, associates with the 50S ribosomal subunit.

In terms of biological role, GTPase that plays an essential role in the late steps of ribosome biogenesis. This chain is GTPase Der, found in Pelodictyon phaeoclathratiforme (strain DSM 5477 / BU-1).